A 391-amino-acid polypeptide reads, in one-letter code: Na(+)/H(+) antiporter NhaA 1 (391 aa).

11 helical membrane-spanning segments follow: residues 25 to 45 (AGGI…NSPL), 56 to 76 (VWLG…IFFL), 98 to 118 (ALPG…YIAI), 128 to 148 (GWAI…SLLG), 157 to 177 (VFLA…IAFF), 180 to 200 (AGLN…LIVM), 208 to 228 (LLPY…SGVH), 264 to 284 (VAFA…LAGI), 297 to 317 (VALG…VLAI), 335 to 355 (GVAM…NLAF), and 364 to 384 (EVKV…IVLL).

This sequence belongs to the NhaA Na(+)/H(+) (TC 2.A.33) antiporter family.

It is found in the cell inner membrane. The catalysed reaction is Na(+)(in) + 2 H(+)(out) = Na(+)(out) + 2 H(+)(in). Functionally, na(+)/H(+) antiporter that extrudes sodium in exchange for external protons. The sequence is that of Na(+)/H(+) antiporter NhaA 1 from Pseudomonas syringae pv. syringae (strain B728a).